We begin with the raw amino-acid sequence, 237 residues long: LexA repressor (237 aa).

Residues 26–46 (FDEMKIALELTSKSGIHRLIT) constitute a DNA-binding region (H-T-H motif). Residues Ser158 and Lys196 each act as for autocatalytic cleavage activity in the active site.

This sequence belongs to the peptidase S24 family. In terms of assembly, homodimer.

The enzyme catalyses Hydrolysis of Ala-|-Gly bond in repressor LexA.. Represses a number of genes involved in the response to DNA damage (SOS response), including recA and lexA. In the presence of single-stranded DNA, RecA interacts with LexA causing an autocatalytic cleavage which disrupts the DNA-binding part of LexA, leading to derepression of the SOS regulon and eventually DNA repair. The polypeptide is LexA repressor (Bartonella quintana (strain Toulouse) (Rochalimaea quintana)).